The primary structure comprises 701 residues: C6 finger domain transcription factor nscR (701 aa).

Positions 17 to 43 form a DNA-binding region, zn(2)-C6 fungal-type; sequence CELCRERKVKCDKLDPCTNCASAGVVC.

It is found in the nucleus. Its function is as follows. Transcription factor that specifically regulates the neosartoricin B biosynthesis gene cluster. The polypeptide is C6 finger domain transcription factor nscR (Arthroderma gypseum (strain ATCC MYA-4604 / CBS 118893) (Microsporum gypseum)).